The primary structure comprises 437 residues: Magnetosome protein MamN (437 aa).

A run of 11 helical transmembrane segments spans residues 26 to 46 (LAVL…GTYT), 53 to 73 (SIYF…ALLA), 95 to 115 (WILV…NSLI), 136 to 156 (VPVI…TMIG), 174 to 194 (FIGG…LFFE), 229 to 249 (YGLI…PLKV), 252 to 268 (GWIA…LGRF), 281 to 301 (DILF…VGIL), 320 to 340 (AILL…GTSA), 358 to 378 (AAWW…LSGA), and 416 to 436 (WGLP…AVLA).

Belongs to the arsenite-antimonite (ArsB) efflux (TC 2.A.45) family.

The protein localises to the magnetosome membrane. Its function is as follows. Plays a role in biomineralization; might regulate pH in the magnetosome. The protein is Magnetosome protein MamN of Magnetospirillum gryphiswaldense (strain DSM 6361 / JCM 21280 / NBRC 15271 / MSR-1).